Reading from the N-terminus, the 199-residue chain is uncharacterized protein (199 aa).

An N-terminal signal peptide occupies residues 1-23 (MSARAPKELRLALPPCLLNRTFA). Residues N19 and N26 are each glycosylated (N-linked (GlcNAc...) asparagine). At 24–60 (SHNASGGSSAGLRSSGAGGGTCITQVGQQLFQSFSST) the chain is on the extracellular side. Residues 61-81 (LVLIVLVTLIFCLLVLSLSTF) traverse the membrane as a helical segment. The Cytoplasmic portion of the chain corresponds to 82 to 199 (HIHKRRMKKR…EGLLQTVVLS (118 aa)). Positions 93–190 (MQRAQEEYER…ASSCLDTPGE (98 aa)) are disordered. Composition is skewed to basic and acidic residues over residues 95–106 (RAQEEYERDHCS) and 124–135 (HGKETRLERQPR). A compositionally biased stretch (low complexity) spans 147 to 163 (SSSSSSSSSPGLLCQGP). Residues 164–176 (CAPPPPLPAPTPQ) show a composition bias toward pro residues.

It is found in the membrane. This is an uncharacterized protein from Mus musculus (Mouse).